An 813-amino-acid chain; its full sequence is Leucine--tRNA ligase (813 aa).

The 'HIGH' region motif lies at 42 to 52; sequence PYTSGNLHIGH. The short motif at 580–584 is the 'KMSKS' region element; it reads KMSKS. Residue Lys-583 coordinates ATP.

It belongs to the class-I aminoacyl-tRNA synthetase family.

It is found in the cytoplasm. It catalyses the reaction tRNA(Leu) + L-leucine + ATP = L-leucyl-tRNA(Leu) + AMP + diphosphate. This Dehalococcoides mccartyi (strain ATCC BAA-2266 / KCTC 15142 / 195) (Dehalococcoides ethenogenes (strain 195)) protein is Leucine--tRNA ligase.